Here is a 360-residue protein sequence, read N- to C-terminus: Phosphoserine aminotransferase (360 aa).

Residue R42 participates in L-glutamate binding. Pyridoxal 5'-phosphate contacts are provided by residues 76 to 77, W102, T153, D172, and Q195; that span reads AR. K196 is modified (N6-(pyridoxal phosphate)lysine). 237 to 238 contributes to the pyridoxal 5'-phosphate binding site; the sequence is NT.

It belongs to the class-V pyridoxal-phosphate-dependent aminotransferase family. SerC subfamily. Homodimer. Pyridoxal 5'-phosphate is required as a cofactor.

The protein resides in the cytoplasm. It catalyses the reaction O-phospho-L-serine + 2-oxoglutarate = 3-phosphooxypyruvate + L-glutamate. The enzyme catalyses 4-(phosphooxy)-L-threonine + 2-oxoglutarate = (R)-3-hydroxy-2-oxo-4-phosphooxybutanoate + L-glutamate. It functions in the pathway amino-acid biosynthesis; L-serine biosynthesis; L-serine from 3-phospho-D-glycerate: step 2/3. Its pathway is cofactor biosynthesis; pyridoxine 5'-phosphate biosynthesis; pyridoxine 5'-phosphate from D-erythrose 4-phosphate: step 3/5. Its function is as follows. Catalyzes the reversible conversion of 3-phosphohydroxypyruvate to phosphoserine and of 3-hydroxy-2-oxo-4-phosphonooxybutanoate to phosphohydroxythreonine. This is Phosphoserine aminotransferase from Aliivibrio fischeri (strain ATCC 700601 / ES114) (Vibrio fischeri).